We begin with the raw amino-acid sequence, 1231 residues long: STE20-like serine/threonine-protein kinase (1231 aa).

Residue serine 14 is modified to Phosphoserine. Residues 34–292 form the Protein kinase domain; it reads WETIGELGDG…TSQLLQHPFV (259 aa). ATP contacts are provided by residues 40–48 and lysine 63; that span reads LGDGAFGKV. Aspartate 155 (proton acceptor) is an active-site residue. Threonine 183 is subject to Phosphothreonine. Serine 189 carries the phosphoserine modification. A disordered region spans residues 309–351; the sequence is AEVTEEVEDGKEEDDDEEIENSLPIPTNKRASSDLSIASSEED. Over residues 312–328 the composition is skewed to acidic residues; the sequence is TEEVEDGKEEDDDEEIE. Residues serine 330, serine 340, serine 341, serine 344, serine 347, serine 348, serine 354, and serine 372 each carry the phosphoserine modification. The span at 337–347 shows a compositional bias: polar residues; sequence KRASSDLSIAS. A disordered region spans residues 405–478; the sequence is PDRATELPES…KQPVLENKLV (74 aa). 2 stretches are compositionally biased toward basic and acidic residues: residues 407–428 and 446–478; these read RATE…RLPD and DHAV…NKLV. Residue serine 507 is modified to Phosphoserine. Residues 516–531 show a composition bias toward basic and acidic residues; the sequence is THEKLRKDDTTQKDVI. Residues 516–757 form a disordered region; that stretch reads THEKLRKDDT…TGSTADNSSI (242 aa). Phosphoserine occurs at positions 536 and 554. A compositionally biased stretch (basic and acidic residues) spans 601–613; that stretch reads TDQKLVENTHEKQ. Residues 615-624 are compositionally biased toward polar residues; the sequence is PISSETTLDT. 2 positions are modified to phosphoserine: serine 641 and serine 661. The segment covering 641-660 has biased composition (acidic residues); sequence STEEVEVEGAVSETDEEDVQ. Residues 683–692 are compositionally biased toward low complexity; sequence EAPAQVEVQV. The span at 693–706 shows a compositional bias: pro residues; sequence PVPPQPSEPPPAPI. Residue serine 775 is modified to Phosphoserine. A Phosphothreonine modification is found at threonine 810. A Phosphoserine modification is found at serine 814. Residues 822–1065 adopt a coiled-coil conformation; the sequence is LRRQELRELR…LKNRQTQERA (244 aa). The region spanning 871-906 is the UVR domain; that stretch reads DQEIENLEKQQKQTIERLEQEHTNRLRDEAKRIKGE. Position 1093 is a phosphothreonine (threonine 1093). Residues 1105 to 1179 are a coiled coil; the sequence is SAQEEKRQKN…ELKEWREKLR (75 aa).

The protein belongs to the protein kinase superfamily. STE Ser/Thr protein kinase family. STE20 subfamily. Proteolytically cleaved by caspase-3. In terms of processing, autophosphorylated. In terms of tissue distribution, ubiquitously expressed.

It is found in the cytoplasm. The enzyme catalyses L-seryl-[protein] + ATP = O-phospho-L-seryl-[protein] + ADP + H(+). It catalyses the reaction L-threonyl-[protein] + ATP = O-phospho-L-threonyl-[protein] + ADP + H(+). Functionally, mediates apoptosis and actin stress fiber dissolution. The protein is STE20-like serine/threonine-protein kinase (SLK) of Cavia porcellus (Guinea pig).